The following is a 135-amino-acid chain: MKQSIVHIALVVNDYDEAIDFYVNKLKFDLIEDTYQAEQDKRWVVVSPPGSNGVSLLLARASKPEQHDFIGNQAGGRVFLFLNTDDFWRDYNRMQLDGIKFVRPPQEQDYGTVAVFEDLYGNLWDLLQLNDKQPI.

A VOC domain is found at 4–129 (SIVHIALVVN…YGNLWDLLQL (126 aa)).

To B.subtilis YwkD.

This is an uncharacterized protein from Shewanella frigidimarina (strain NCIMB 400).